A 177-amino-acid chain; its full sequence is Large ribosomal subunit protein uL6 (177 aa).

It belongs to the universal ribosomal protein uL6 family. As to quaternary structure, part of the 50S ribosomal subunit.

Functionally, this protein binds to the 23S rRNA, and is important in its secondary structure. It is located near the subunit interface in the base of the L7/L12 stalk, and near the tRNA binding site of the peptidyltransferase center. The sequence is that of Large ribosomal subunit protein uL6 from Pseudoalteromonas atlantica (strain T6c / ATCC BAA-1087).